The sequence spans 401 residues: Putative hetero-Diels-Alderase asR5 (401 aa).

A signal peptide spans methionine 1–alanine 21. Asparagine 71, asparagine 77, asparagine 240, and asparagine 334 each carry an N-linked (GlcNAc...) asparagine glycan.

It belongs to the eupF Diels-Alderase family.

The protein operates within secondary metabolite biosynthesis; terpenoid biosynthesis. In terms of biological role, putative hetero-Diels-Alderase; part of the gene cluster that mediates the biosynthesis of xenovulene A, an unusual meroterpenoid that has potent inhibitory effects on the human gamma-aminobutyrate A (GABAA) benzodiazepine receptor. The first step of xenovulene A biosynthesis is the biosynthesis of 3-methylorcinaldehyde performed by the non-reducing polyketide synthase aspks1. The salicylate hydroxylase asL1 then catalyzes the oxidative dearomatization of 3-methylorcinaldehyde to yield a dearomatized hydroxycyclohexadione. The 2-oxoglutarate-dependent dioxygenase asL3 further catalyzes the oxidative ring expansion to provide the first tropolone metabolite. The cytochrome P450 monooxygenase asR2 allows the synthesis of tropolone hemiacetal. In parallel, a previously unrecognised class of terpene cyclase, asR6, produces alpha-humulene from farnesylpyrophosphate (FPP). The putative Diels-Alderase asR5 probably catalyzes the formation of the tropolone-humulene skeleton by linking humulene and the polyketide moiety. Oxidative-ring contractions catalyzed by asL4 and asL6 then processively remove carbon atoms from the polyketide to yield xenovulene A. The chain is Putative hetero-Diels-Alderase asR5 from Sarocladium schorii (Acremonium strictum (strain IMI 501407)).